Reading from the N-terminus, the 198-residue chain is Single-stranded DNA cytosine deaminase (198 aa).

A Bipartite nuclear localization signal motif is present at residues 1 to 30 (MDSLLMKQRKFLYHFKNVRWAKGRHETYLC). The interaction with SUPT6H stretch occupies residues 2-26 (DSLLMKQRKFLYHFKNVRWAKGRHE). The CMP/dCMP-type deaminase domain occupies 23 to 129 (GRHETYLCYV…KAEPEGLRRL (107 aa)). Residue Thr-27 is modified to Phosphothreonine; by PKA. Ser-38 is modified (phosphoserine; by PKA). Positions 39-42 (ATSF) are important for interaction with CTNNBL1. His-56 lines the Zn(2+) pocket. The Proton donor role is filled by Glu-58. Cys-87 and Cys-90 together coordinate Zn(2+). Positions 88–116 (YDCARHVADFLRGYPNLSLRIFAARLYFC) are required for interaction with RNF126. The Nuclear export signal motif lies at 183–198 (LYEVDDLRDAFRTLGL).

It belongs to the cytidine and deoxycytidylate deaminase family. In terms of assembly, interacts with CTNNBL1; the interaction is important for the immunoglobulin switch activity of AICDA. Interacts (via its NLS) with KPNA1. Interacts with PKA/PRKACA and PRKAR1A/PKR1. Interacts with SUPT6H, TRIM28 and NCL. Directly interacts with MCM3AP; this interaction may favor AICDA recruitment to immunoglobulin variable region genes, hence promoting somatic hypermutations. Zn(2+) serves as cofactor. In terms of processing, ser-38 is the major site whereas Thr-27 is the minor site of phosphorylation. Phosphorylation regulates its class-switch recombination activity. Probably monoubiquitinated on several residues by RNF126. Expressed in thymus, lung, spleen, kidney, small intestine, lymph node and tonsil.

Its subcellular location is the nucleus. The protein localises to the cytoplasm. The catalysed reaction is a 2'-deoxycytidine in single-stranded DNA + H2O + H(+) = a 2'-deoxyuridine in single-stranded DNA + NH4(+). In terms of biological role, single-stranded DNA-specific cytidine deaminase. Involved in somatic hypermutation (SHM), gene conversion, and class-switch recombination (CSR) in B-lymphocytes by deaminating C to U during transcription of Ig-variable (V) and Ig-switch (S) region DNA. Required for several crucial steps of B-cell terminal differentiation necessary for efficient antibody responses. May also play a role in the epigenetic regulation of gene expression by participating in DNA demethylation. The sequence is that of Single-stranded DNA cytosine deaminase (AICDA) from Canis lupus familiaris (Dog).